The following is a 1034-amino-acid chain: Glycine dehydrogenase (decarboxylating), mitochondrial (1034 aa).

The N-terminal 63 residues, Met-1 to Thr-63, are a transit peptide targeting the mitochondrion. Lys-770 is modified (N6-(pyridoxal phosphate)lysine).

It belongs to the GcvP family. As to quaternary structure, homodimer. The glycine cleavage system is composed of four proteins: P, T, L and H. The cofactor is pyridoxal 5'-phosphate.

Its subcellular location is the mitochondrion. The catalysed reaction is N(6)-[(R)-lipoyl]-L-lysyl-[glycine-cleavage complex H protein] + glycine + H(+) = N(6)-[(R)-S(8)-aminomethyldihydrolipoyl]-L-lysyl-[glycine-cleavage complex H protein] + CO2. The glycine cleavage system catalyzes the degradation of glycine. The P protein binds the alpha-amino group of glycine through its pyridoxal phosphate cofactor; CO(2) is released and the remaining methylamine moiety is then transferred to the lipoamide cofactor of the H protein. In Flaveria anomala (Yellowtops), this protein is Glycine dehydrogenase (decarboxylating), mitochondrial (GDCSP).